Consider the following 557-residue polypeptide: Dihydroxy-acid dehydratase (557 aa).

Residue D78 coordinates Mg(2+). Residue C119 coordinates [2Fe-2S] cluster. Mg(2+) is bound by residues D120 and K121. K121 bears the N6-carboxylysine mark. C192 is a binding site for [2Fe-2S] cluster. E442 is a Mg(2+) binding site. Residue S468 is the Proton acceptor of the active site.

Belongs to the IlvD/Edd family. As to quaternary structure, homodimer. [2Fe-2S] cluster is required as a cofactor. It depends on Mg(2+) as a cofactor.

It carries out the reaction (2R)-2,3-dihydroxy-3-methylbutanoate = 3-methyl-2-oxobutanoate + H2O. The enzyme catalyses (2R,3R)-2,3-dihydroxy-3-methylpentanoate = (S)-3-methyl-2-oxopentanoate + H2O. The protein operates within amino-acid biosynthesis; L-isoleucine biosynthesis; L-isoleucine from 2-oxobutanoate: step 3/4. Its pathway is amino-acid biosynthesis; L-valine biosynthesis; L-valine from pyruvate: step 3/4. Its function is as follows. Functions in the biosynthesis of branched-chain amino acids. Catalyzes the dehydration of (2R,3R)-2,3-dihydroxy-3-methylpentanoate (2,3-dihydroxy-3-methylvalerate) into 2-oxo-3-methylpentanoate (2-oxo-3-methylvalerate) and of (2R)-2,3-dihydroxy-3-methylbutanoate (2,3-dihydroxyisovalerate) into 2-oxo-3-methylbutanoate (2-oxoisovalerate), the penultimate precursor to L-isoleucine and L-valine, respectively. This Bacillus thuringiensis subsp. konkukian (strain 97-27) protein is Dihydroxy-acid dehydratase.